A 514-amino-acid polypeptide reads, in one-letter code: Peptide chain release factor 3 (514 aa).

Residues lysine 8–histidine 268 enclose the tr-type G domain. Residues serine 17 to threonine 24, aspartate 85 to histidine 89, and asparagine 139 to aspartate 142 contribute to the GTP site.

It belongs to the TRAFAC class translation factor GTPase superfamily. Classic translation factor GTPase family. PrfC subfamily.

The protein localises to the cytoplasm. Increases the formation of ribosomal termination complexes and stimulates activities of RF-1 and RF-2. It binds guanine nucleotides and has strong preference for UGA stop codons. It may interact directly with the ribosome. The stimulation of RF-1 and RF-2 is significantly reduced by GTP and GDP, but not by GMP. This Streptococcus sanguinis (strain SK36) protein is Peptide chain release factor 3.